Consider the following 30-residue polypeptide: Babycurus-toxin 1 (30 aa).

One can recognise an LCN-type CS-alpha/beta domain in the interval 2–30; sequence KDGYPTNSKGCKISGCLPGENKFCLNECQ.

This sequence belongs to the long (4 C-C) scorpion toxin superfamily. Sodium channel inhibitor family. Expressed by the venom gland.

The protein localises to the secreted. In terms of biological role, binds to sodium channels (Nav) and inhibits both the activation and inactivation of the activated channels, thereby blocking neuronal transmission. This Babycurus centrurimorphus (East African scorpion) protein is Babycurus-toxin 1.